Reading from the N-terminus, the 359-residue chain is Chorismate synthase (359 aa).

Arg48 and Arg54 together coordinate NADP(+). FMN-binding positions include 129-131 (RSS), 241-242 (NA), Gly285, 300-304 (KPTSS), and Arg326.

Belongs to the chorismate synthase family. In terms of assembly, homotetramer. Requires FMNH2 as cofactor.

It catalyses the reaction 5-O-(1-carboxyvinyl)-3-phosphoshikimate = chorismate + phosphate. Its pathway is metabolic intermediate biosynthesis; chorismate biosynthesis; chorismate from D-erythrose 4-phosphate and phosphoenolpyruvate: step 7/7. In terms of biological role, catalyzes the anti-1,4-elimination of the C-3 phosphate and the C-6 proR hydrogen from 5-enolpyruvylshikimate-3-phosphate (EPSP) to yield chorismate, which is the branch point compound that serves as the starting substrate for the three terminal pathways of aromatic amino acid biosynthesis. This reaction introduces a second double bond into the aromatic ring system. The chain is Chorismate synthase from Afipia carboxidovorans (strain ATCC 49405 / DSM 1227 / KCTC 32145 / OM5) (Oligotropha carboxidovorans).